We begin with the raw amino-acid sequence, 634 residues long: Mitochondrial Rho GTPase 1 (634 aa).

The Cytoplasmic portion of the chain corresponds to 1–604 (MLCCMRICVC…PRSEEDVEGK (604 aa)). The region spanning 2-171 (LCCMRICVCG…FFLCQKAVTH (170 aa)) is the Miro 1 domain. Residues 11–18 (GDEGTGKS), 60–64 (DTSAV), and 116–119 (NKSD) each bind GTP. EF-hand domains lie at 187–222 (AAVAALQRIFYLSDKDRDGYLSDKEIKDFQMRCFEK) and 307–342 (EGYRFFVNLFLLSDKDNDGGLNDAELASLFAPTPGL). Ca(2+)-binding residues include Asp200, Asp202, Asp204, Tyr206, Glu211, Asp320, Asp322, Asp324, and Glu331. The interval 399–419 (NPSTTAALKVTRPRKRRKRPG) is disordered. Basic residues predominate over residues 409–419 (TRPRKRRKRPG). The 167-residue stretch at 423-589 (RNVVLGHIVG…FVHIAEAAME (167 aa)) folds into the Miro 2 domain. GTP contacts are provided by residues 432–439 (GAPGSGKS), 468–472 (ELPGG), and 538–541 (LKAD). The helical; Anchor for type IV membrane protein transmembrane segment at 605-625 (WMSWGIALGAVVCAGAAAVMI) threads the bilayer. At 626–634 (WRRVSGSGV) the chain is on the mitochondrial intermembrane side.

The protein belongs to the mitochondrial Rho GTPase family.

It localises to the mitochondrion outer membrane. In terms of biological role, mitochondrial GTPase involved in mitochondrial trafficking. Probably involved in control of anterograde transport of mitochondria and their subcellular distribution. In Emericella nidulans (strain FGSC A4 / ATCC 38163 / CBS 112.46 / NRRL 194 / M139) (Aspergillus nidulans), this protein is Mitochondrial Rho GTPase 1 (gem1).